We begin with the raw amino-acid sequence, 448 residues long: MRSHTATMVDRIEDTSRADREAALADAGHNVFELASDDVAVDLLTDSGTGTMSNDQWAAMLQGDEAYAGSASFEDLAVAAEDVMGFQHIIPAHQGRGAENVLYGAVLSAGDTVLNNAHFDTTRAHVAANDATPVDCPVDGARDPDTDAPFKGNFSVERARRVVDDVGADAVPVVVLTITNNSMAGQPVSIENTREVAAFADDIDATFVIDACRFAENAHFVQQREPGYEHDSVAAIAREQLSYADACVMSGKKDGLVNVGGFVGLHDDGRLHEQCRQRGILYEGFSTYGGMSGRDMAAFAVGLREAVEPPYVAERVAQVQRLADALTDRDVPIYQPAGGHAVYIDANAALPHLPREQFPGQAFVCELYREGGVRAVELGRFAFPDTDRRDLVRLALPRRTYGPDHLDHVADTAAAVCERGTDVTGLEIVSEPELTELRHFSAALQPVA.

Position 253 is an N6-(pyridoxal phosphate)lysine (K253).

It belongs to the beta-eliminating lyase family. Pyridoxal 5'-phosphate serves as cofactor.

It catalyses the reaction L-tryptophan + H2O = indole + pyruvate + NH4(+). Its pathway is amino-acid degradation; L-tryptophan degradation via pyruvate pathway; indole and pyruvate from L-tryptophan: step 1/1. This is Probable tryptophanase from Halobacterium salinarum (strain ATCC 29341 / DSM 671 / R1).